A 101-amino-acid chain; its full sequence is Urease subunit beta (101 aa).

Belongs to the urease beta subunit family. Heterotrimer of UreA (gamma), UreB (beta) and UreC (alpha) subunits. Three heterotrimers associate to form the active enzyme.

The protein localises to the cytoplasm. The catalysed reaction is urea + 2 H2O + H(+) = hydrogencarbonate + 2 NH4(+). Its pathway is nitrogen metabolism; urea degradation; CO(2) and NH(3) from urea (urease route): step 1/1. The polypeptide is Urease subunit beta (Psychromonas ingrahamii (strain DSM 17664 / CCUG 51855 / 37)).